The chain runs to 269 residues: Elongation factor Ts (269 aa).

Residues 76–79 (TDFV) form an involved in Mg(2+) ion dislocation from EF-Tu region.

It belongs to the EF-Ts family.

Its subcellular location is the cytoplasm. Its function is as follows. Associates with the EF-Tu.GDP complex and induces the exchange of GDP to GTP. It remains bound to the aminoacyl-tRNA.EF-Tu.GTP complex up to the GTP hydrolysis stage on the ribosome. The protein is Elongation factor Ts of Deinococcus geothermalis (strain DSM 11300 / CIP 105573 / AG-3a).